A 293-amino-acid chain; its full sequence is Probable xyloglucan endotransglucosylase/hydrolase protein B (293 aa).

The first 21 residues, 1–21 (MASSLLILCLVLVSLASSALC), serve as a signal peptide directing secretion. One can recognise a GH16 domain in the interval 23–220 (APRRPVDVPF…WSKAPFVAEY (198 aa)). The active-site Nucleophile is glutamate 106. Glutamate 110 serves as the catalytic Proton donor. Glutamate 110 contacts xyloglucan. Asparagine 114 carries an N-linked (GlcNAc...) asparagine glycan. Xyloglucan contacts are provided by residues 123-125 (QTN), 133-135 (DRE), 199-200 (DW), and glycine 204. Cystine bridges form between cysteine 228–cysteine 237 and cysteine 274–cysteine 287. Arginine 279 serves as a coordination point for xyloglucan.

The protein belongs to the glycosyl hydrolase 16 family. XTH group 1 subfamily. Contains at least one intrachain disulfide bond essential for its enzymatic activity. Predominantly expressed in the phloem fibers of growing internodes. Weakly or not expressed in the xylem. In the internode, it is expressed closer to the bottom of the internode compared to XTHA.

It is found in the secreted. Its subcellular location is the cell wall. It localises to the extracellular space. The protein resides in the apoplast. It catalyses the reaction breaks a beta-(1-&gt;4) bond in the backbone of a xyloglucan and transfers the xyloglucanyl segment on to O-4 of the non-reducing terminal glucose residue of an acceptor, which can be a xyloglucan or an oligosaccharide of xyloglucan.. Catalyzes xyloglucan endohydrolysis (XEH) and/or endotransglycosylation (XET). Cleaves and religates xyloglucan polymers, an essential constituent of the primary cell wall, and thereby participates in cell wall construction of growing tissues. The polypeptide is Probable xyloglucan endotransglucosylase/hydrolase protein B (XTHB) (Phaseolus angularis (Azuki bean)).